The following is a 734-amino-acid chain: Photosystem I P700 chlorophyll a apoprotein A2 (734 aa).

8 helical membrane-spanning segments follow: residues 46–69 (IFAS…FHVA), 135–158 (LYTG…LHLQ), 175–199 (LNHH…HVAI), 273–291 (IAHH…GHMY), 330–353 (IHFQ…QHMY), 369–395 (AALY…IFFI), 417–439 (AIIS…LYVH), and 517–535 (FLVH…LILV). The [4Fe-4S] cluster site is built by Cys559 and Cys568. Transmembrane regions (helical) follow at residues 575-596 (AFYL…YWHW) and 643-665 (LSVW…MFLI). The chlorophyll a site is built by His654, Met662, and Tyr670. Residue Trp671 participates in phylloquinone binding. Residues 707-727 (LVGLAHFSVGYIFTYAAFLIA) traverse the membrane as a helical segment.

It belongs to the PsaA/PsaB family. The PsaA/B heterodimer binds the P700 chlorophyll special pair and subsequent electron acceptors. PSI consists of a core antenna complex that captures photons, and an electron transfer chain that converts photonic excitation into a charge separation. The eukaryotic PSI reaction center is composed of at least 11 subunits. P700 is a chlorophyll a/chlorophyll a' dimer, A0 is one or more chlorophyll a, A1 is one or both phylloquinones and FX is a shared 4Fe-4S iron-sulfur center. serves as cofactor.

It localises to the plastid. Its subcellular location is the chloroplast thylakoid membrane. The enzyme catalyses reduced [plastocyanin] + hnu + oxidized [2Fe-2S]-[ferredoxin] = oxidized [plastocyanin] + reduced [2Fe-2S]-[ferredoxin]. Functionally, psaA and PsaB bind P700, the primary electron donor of photosystem I (PSI), as well as the electron acceptors A0, A1 and FX. PSI is a plastocyanin-ferredoxin oxidoreductase, converting photonic excitation into a charge separation, which transfers an electron from the donor P700 chlorophyll pair to the spectroscopically characterized acceptors A0, A1, FX, FA and FB in turn. Oxidized P700 is reduced on the lumenal side of the thylakoid membrane by plastocyanin. The protein is Photosystem I P700 chlorophyll a apoprotein A2 of Pelargonium hortorum (Common geranium).